The primary structure comprises 129 residues: Cytochrome c oxidase subunit 5B, mitochondrial (129 aa).

Residues 1 to 31 (MASRLLRGAGALAAQTLRARGPNGVAVVRSM) constitute a mitochondrion transit peptide. An N6-acetyllysine mark is found at lysine 68 and lysine 86. Residues cysteine 91, cysteine 93, cysteine 113, and cysteine 116 each contribute to the Zn(2+) site. N6-acetyllysine is present on lysine 121.

This sequence belongs to the cytochrome c oxidase subunit 5B family. Component of the cytochrome c oxidase (complex IV, CIV), a multisubunit enzyme composed of 14 subunits. The complex is composed of a catalytic core of 3 subunits MT-CO1, MT-CO2 and MT-CO3, encoded in the mitochondrial DNA, and 11 supernumerary subunits COX4I, COX5A, COX5B, COX6A, COX6B, COX6C, COX7A, COX7B, COX7C, COX8 and NDUFA4, which are encoded in the nuclear genome. The complex exists as a monomer or a dimer and forms supercomplexes (SCs) in the inner mitochondrial membrane with NADH-ubiquinone oxidoreductase (complex I, CI) and ubiquinol-cytochrome c oxidoreductase (cytochrome b-c1 complex, complex III, CIII), resulting in different assemblies (supercomplex SCI(1)III(2)IV(1) and megacomplex MCI(2)III(2)IV(2)).

Its subcellular location is the mitochondrion inner membrane. The protein operates within energy metabolism; oxidative phosphorylation. In terms of biological role, component of the cytochrome c oxidase, the last enzyme in the mitochondrial electron transport chain which drives oxidative phosphorylation. The respiratory chain contains 3 multisubunit complexes succinate dehydrogenase (complex II, CII), ubiquinol-cytochrome c oxidoreductase (cytochrome b-c1 complex, complex III, CIII) and cytochrome c oxidase (complex IV, CIV), that cooperate to transfer electrons derived from NADH and succinate to molecular oxygen, creating an electrochemical gradient over the inner membrane that drives transmembrane transport and the ATP synthase. Cytochrome c oxidase is the component of the respiratory chain that catalyzes the reduction of oxygen to water. Electrons originating from reduced cytochrome c in the intermembrane space (IMS) are transferred via the dinuclear copper A center (CU(A)) of subunit 2 and heme A of subunit 1 to the active site in subunit 1, a binuclear center (BNC) formed by heme A3 and copper B (CU(B)). The BNC reduces molecular oxygen to 2 water molecules using 4 electrons from cytochrome c in the IMS and 4 protons from the mitochondrial matrix. The protein is Cytochrome c oxidase subunit 5B, mitochondrial (COX5B) of Sus scrofa (Pig).